The sequence spans 271 residues: Co-chaperone protein DjlA (271 aa).

Over 1 to 6 the chain is Periplasmic; it reads MQYWGK. The helical transmembrane segment at 7-31 threads the bilayer; sequence IIGVAVALLMGGGFWGVVLGLLIGH. Topologically, residues 32–271 are cytoplasmic; sequence MFDKARSRKM…ELIKQQKGFK (240 aa). Residues 205–271 form the J domain; the sequence is DACNVLGVKP…ELIKQQKGFK (67 aa).

In terms of assembly, homodimer.

It is found in the cell inner membrane. Regulatory DnaK co-chaperone. Direct interaction between DnaK and DjlA is needed for the induction of the wcaABCDE operon, involved in the synthesis of a colanic acid polysaccharide capsule, possibly through activation of the RcsB/RcsC phosphotransfer signaling pathway. The colanic acid capsule may help the bacterium survive conditions outside the host. The sequence is that of Co-chaperone protein DjlA from Escherichia coli (strain K12).